The primary structure comprises 261 residues: Methionine aminopeptidase (261 aa).

Histidine 78 serves as a coordination point for substrate. A divalent metal cation-binding residues include aspartate 96, aspartate 107, and histidine 170. Position 177 (histidine 177) interacts with substrate. A divalent metal cation contacts are provided by glutamate 202 and glutamate 233.

It belongs to the peptidase M24A family. Methionine aminopeptidase type 1 subfamily. As to quaternary structure, monomer. Co(2+) serves as cofactor. Requires Zn(2+) as cofactor. Mn(2+) is required as a cofactor. It depends on Fe(2+) as a cofactor.

The enzyme catalyses Release of N-terminal amino acids, preferentially methionine, from peptides and arylamides.. In terms of biological role, removes the N-terminal methionine from nascent proteins. The N-terminal methionine is often cleaved when the second residue in the primary sequence is small and uncharged (Met-Ala-, Cys, Gly, Pro, Ser, Thr, or Val). Requires deformylation of the N(alpha)-formylated initiator methionine before it can be hydrolyzed. The chain is Methionine aminopeptidase from Buchnera aphidicola subsp. Schizaphis graminum (strain Sg).